A 615-amino-acid chain; its full sequence is Sodium-dependent noradrenaline transporter (615 aa).

The tract at residues 1–28 (MLLARMNPQVQPENGGAGPGSEQPPRKR) is disordered. Over 1–60 (MLLARMNPQVQPENGGAGPGSEQPPRKRKEVLVVKERNGVQCLLASRDGDEQPRETWGKK) the chain is Cytoplasmic. A helical transmembrane segment spans residues 61-86 (IDFLLSVVGFAVDLANVWRFPYLCYK). 3 residues coordinate Na(+): Gly-69, Ala-71, and Val-72. Position 73 (Asp-73) interacts with (R)-noradrenaline. Asp-73 serves as a coordination point for dopamine. Asn-76 contributes to the Na(+) binding site. The (R)-noradrenaline site is built by Tyr-85 and Lys-86. Over 87 to 90 (NGGG) the chain is Extracellular. The helical transmembrane segment at 91–114 (AFLIPYTLFLIIAGMPLFYMELAL) threads the bilayer. The Cytoplasmic segment spans residues 115-133 (GQYNREGAATVWKICPFFK). A helical transmembrane segment spans residues 134–164 (GVGYAVILIALYVGFYYNVIIAWSLYYLFSS). (R)-noradrenaline-binding residues include Ala-143 and Gly-147. Ala-143 is a binding site for dopamine. Residues 165 to 231 (FTPTLPWTDC…SSGIHDIGLP (67 aa)) are Extracellular-facing. The cysteines at positions 174 and 183 are disulfide-linked. N-linked (GlcNAc...) asparagine glycans are attached at residues Asn-182, Asn-190, and Asn-196. Residues 232–252 (QWQLLLCLIIVVIVLFFSLWK) form a helical membrane-spanning segment. The Cytoplasmic portion of the chain corresponds to 253-255 (GVK). The chain crosses the membrane as a helical span at residues 256–280 (TSGKVVWITATLPYLVLFVLLVHGI). The Extracellular segment spans residues 281–304 (TLPGASNGINAYLHIDFYRLKEAT). A helical membrane pass occupies residues 305–330 (VWIDAATQIFFSLGAGFGVLIAFASY). Phe-315 is a (R)-noradrenaline binding site. Residue Phe-315 participates in dopamine binding. A Na(+)-binding site is contributed by Ser-316. The Cytoplasmic segment spans residues 331-336 (NKFDNN). The helical transmembrane segment at 337 to 360 (CYRDALLTSTINCVTSFISGFAIF) threads the bilayer. Asn-348 serves as a coordination point for Na(+). The Extracellular portion of the chain corresponds to 361 to 400 (SILGYMAHEHKVNIEDVATEGAGLVFILYPEAISTLSGST). Position 380 (Glu-380) interacts with (R)-noradrenaline. Glu-380 provides a ligand contact to dopamine. Residues 401 to 426 (FWAIVFFIMLLALGIDSSMGGMEAVI) traverse the membrane as a helical segment. Na(+)-binding residues include Asp-416 and Ser-417. Topologically, residues 427–441 (TGLADDFQVLKRHRK) are cytoplasmic. A helical membrane pass occupies residues 442–462 (LFTFAVSFGTFLLALFCITKG). Residue Gly-463 is a topological domain, extracellular. A helical membrane pass occupies residues 464-490 (IYVLTLLDTFAAGTSILFAVLMEAIGV). Residues 491–520 (SWFYGVDRFSNDIQQMMGFKPGLYWRLCWK) lie on the Cytoplasmic side of the membrane. Residues 521 to 543 (FVSPAFLLFVVIVSIINFKPLTY) traverse the membrane as a helical segment. The Extracellular portion of the chain corresponds to 544-546 (DDY). A helical transmembrane segment spans residues 547–567 (IFPLWANWVGWGIAGSSMVLV). The Cytoplasmic segment spans residues 568–615 (PAYIVYKFFSTRGSIRERLAYGITPASEHHLVAQRDIRQFQLQHWLAI).

Belongs to the sodium:neurotransmitter symporter (SNF) (TC 2.A.22) family. SLC6A2 subfamily. As to quaternary structure, monomer. Can form homodimers in the cell membrane; homodimerization is mostly mediated by cholesterol and lipids, and regulates neurotransmitter transport activity. Interacts with PRKCABP. Palmitoylated. Palmitoylation regulates protein levels and neurotransmitter transport.

The protein resides in the cell membrane. It localises to the cell projection. The protein localises to the axon. Its subcellular location is the synapse. It is found in the synaptosome. The catalysed reaction is (R)-noradrenaline(out) + chloride(out) + Na(+)(out) = (R)-noradrenaline(in) + chloride(in) + Na(+)(in). It carries out the reaction dopamine(out) + chloride(out) + Na(+)(out) = dopamine(in) + chloride(in) + Na(+)(in). It catalyses the reaction dopamine(out) + chloride(out) + 2 Na(+)(out) = dopamine(in) + chloride(in) + 2 Na(+)(in). With respect to regulation, inhibited by nisoxetine, oxaprotiline and desipramin. Its function is as follows. Mediates sodium- and chloride-dependent transport of norepinephrine (also known as noradrenaline), the primary signaling neurotransmitter in the autonomic sympathetic nervous system. Is responsible for norepinephrine re-uptake and clearance from the synaptic cleft, thus playing a crucial role in norepinephrine inactivation and homeostasis. Can also mediate sodium- and chloride-dependent transport of dopamine. The polypeptide is Sodium-dependent noradrenaline transporter (SLC6A2) (Bos taurus (Bovine)).